The sequence spans 427 residues: Serine hydroxymethyltransferase (427 aa).

A (6S)-5,6,7,8-tetrahydrofolate-binding site is contributed by 122–124 (GHI). Residue Lys228 is modified to N6-(pyridoxal phosphate)lysine.

This sequence belongs to the SHMT family. In terms of assembly, homodimer. Pyridoxal 5'-phosphate serves as cofactor.

It is found in the cytoplasm. The protein operates within amino-acid biosynthesis; glycine biosynthesis; glycine from L-serine: step 1/1. Functionally, catalyzes the reversible interconversion of serine and glycine with a modified folate serving as the one-carbon carrier. Also exhibits a pteridine-independent aldolase activity toward beta-hydroxyamino acids, producing glycine and aldehydes, via a retro-aldol mechanism. This Thermococcus onnurineus (strain NA1) protein is Serine hydroxymethyltransferase.